Here is a 166-residue protein sequence, read N- to C-terminus: Small ribosomal subunit protein uS4 (166 aa).

One can recognise an S4 RNA-binding domain in the interval 103-165 (RRLQTVVYKK…PTSPYFKKAQ (63 aa)).

It belongs to the universal ribosomal protein uS4 family. As to quaternary structure, part of the 30S ribosomal subunit. Contacts protein S5. The interaction surface between S4 and S5 is involved in control of translational fidelity.

Its function is as follows. One of the primary rRNA binding proteins, it binds directly to 16S rRNA where it nucleates assembly of the body of the 30S subunit. Functionally, with S5 and S12 plays an important role in translational accuracy. This is Small ribosomal subunit protein uS4 from Ignicoccus hospitalis (strain KIN4/I / DSM 18386 / JCM 14125).